A 208-amino-acid chain; its full sequence is FMN-dependent NADH:quinone oxidoreductase 1 (208 aa).

17-19 contacts FMN; it reads SVS.

The protein belongs to the azoreductase type 1 family. In terms of assembly, homodimer. FMN serves as cofactor.

The catalysed reaction is 2 a quinone + NADH + H(+) = 2 a 1,4-benzosemiquinone + NAD(+). The enzyme catalyses N,N-dimethyl-1,4-phenylenediamine + anthranilate + 2 NAD(+) = 2-(4-dimethylaminophenyl)diazenylbenzoate + 2 NADH + 2 H(+). Functionally, quinone reductase that provides resistance to thiol-specific stress caused by electrophilic quinones. Also exhibits azoreductase activity. Catalyzes the reductive cleavage of the azo bond in aromatic azo compounds to the corresponding amines. This is FMN-dependent NADH:quinone oxidoreductase 1 from Listeria innocua serovar 6a (strain ATCC BAA-680 / CLIP 11262).